Reading from the N-terminus, the 285-residue chain is Troponin T, cardiac muscle (285 aa).

Over residues methionine 1–valine 58 the composition is skewed to acidic residues. Disordered stretches follow at residues methionine 1 to valine 83 and arginine 111 to lysine 206. At serine 2 the chain carries N-acetylserine. Serine 2 bears the Phosphoserine; by CK2 mark. The span at arginine 66–isoleucine 77 shows a compositional bias: pro residues. Basic and acidic residues-rich tracts occupy residues arginine 111 to arginine 171 and glutamine 190 to lysine 206. The residue at position 191 (threonine 191) is a Phosphothreonine; by PKC/PRKCA. Phosphoserine; by PKC/PRKCA is present on serine 195. Threonine 200 carries the post-translational modification Phosphothreonine; by PKC/PRKCA and RAF1. Phosphothreonine; by PKC/PRKCA is present on threonine 281.

This sequence belongs to the troponin T family. The N-terminus is blocked. Post-translationally, phosphorylation at Thr-200 by PRKCA induces significant reduction in myofilament calcium sensitivity and actomyosin ATPase activity.

Functionally, troponin T is the tropomyosin-binding subunit of troponin, the thin filament regulatory complex which confers calcium-sensitivity to striated muscle actomyosin ATPase activity. In Bos taurus (Bovine), this protein is Troponin T, cardiac muscle (TNNT2).